A 167-amino-acid polypeptide reads, in one-letter code: Peptide deformylase (167 aa).

The Fe cation site is built by Cys91 and His133. Glu134 is an active-site residue. His137 serves as a coordination point for Fe cation.

This sequence belongs to the polypeptide deformylase family. Fe(2+) serves as cofactor.

The catalysed reaction is N-terminal N-formyl-L-methionyl-[peptide] + H2O = N-terminal L-methionyl-[peptide] + formate. In terms of biological role, removes the formyl group from the N-terminal Met of newly synthesized proteins. Requires at least a dipeptide for an efficient rate of reaction. N-terminal L-methionine is a prerequisite for activity but the enzyme has broad specificity at other positions. The protein is Peptide deformylase of Neisseria gonorrhoeae (strain ATCC 700825 / FA 1090).